Here is a 382-residue protein sequence, read N- to C-terminus: Elloramycin glycosyltransferase ElmGT (382 aa).

This sequence belongs to the glycosyltransferase 28 family.

It catalyses the reaction 8-demethyltetracenomycin C + dTDP-beta-L-rhamnose = 8-demethyl-8-alpha-L-rhamnosyl-tetracenomycin C + dTDP + H(+). Its pathway is antibiotic biosynthesis. Glycosyltransferase that transfers an L-rhamnose moiety from dTDP-L-rhamnose to the elloramycin aglycone 8-demethyl-tetracenomycin C (8DMTC) in elloramycin biosynthesis, an antitumor polyketide. Possesses donor substrate flexibility: able to transfer at least 11 different sugars to 8DMTC, such as NDP-D-glucose, as well as NDP-L-digitoxose, including both L- and D-isomeric forms of some sugars. The sequence is that of Elloramycin glycosyltransferase ElmGT from Streptomyces olivaceus.